Reading from the N-terminus, the 278-residue chain is 4-deoxy-L-threo-5-hexosulose-uronate ketol-isomerase (278 aa).

Zn(2+) is bound by residues His-196, His-198, Glu-203, and His-245.

This sequence belongs to the KduI family. Homohexamer. Zn(2+) is required as a cofactor.

The catalysed reaction is 5-dehydro-4-deoxy-D-glucuronate = 3-deoxy-D-glycero-2,5-hexodiulosonate. It participates in glycan metabolism; pectin degradation; 2-dehydro-3-deoxy-D-gluconate from pectin: step 4/5. Functionally, catalyzes the isomerization of 5-dehydro-4-deoxy-D-glucuronate to 3-deoxy-D-glycero-2,5-hexodiulosonate. In Escherichia coli O139:H28 (strain E24377A / ETEC), this protein is 4-deoxy-L-threo-5-hexosulose-uronate ketol-isomerase.